A 239-amino-acid chain; its full sequence is Serine protease SplF (239 aa).

Positions 1-36 (MNKNIIIKSIAALTILTSITGVGTTVVDGIQQTAKA) are cleaved as a signal peptide. Residues His-75, Asp-114, and Ser-192 each act as charge relay system in the active site.

This sequence belongs to the peptidase S1B family.

Its subcellular location is the secreted. This chain is Serine protease SplF (splF), found in Staphylococcus aureus (strain JH9).